Consider the following 265-residue polypeptide: Glutamate racemase (265 aa).

Substrate is bound by residues 7-8 (DS) and 39-40 (YG). C70 functions as the Proton donor/acceptor in the catalytic mechanism. 71–72 (NT) contributes to the substrate binding site. Residue C179 is the Proton donor/acceptor of the active site. Residue 180 to 181 (TH) coordinates substrate.

The protein belongs to the aspartate/glutamate racemases family.

It carries out the reaction L-glutamate = D-glutamate. It functions in the pathway cell wall biogenesis; peptidoglycan biosynthesis. Its function is as follows. Provides the (R)-glutamate required for cell wall biosynthesis. This Gloeobacter violaceus (strain ATCC 29082 / PCC 7421) protein is Glutamate racemase.